Reading from the N-terminus, the 266-residue chain is N-acetyltransferase ECO1 (266 aa).

The CCHH-type zinc finger occupies 31 to 55; that stretch reads KKCTECQMSYIIDSPADCAEHKKYH. The N-acetyltransferase domain maps to 108-266; the sequence is TPGKTAEVKA…SGELLIPCYI (159 aa).

The protein belongs to the acetyltransferase family. ECO subfamily.

The protein resides in the nucleus. Probable acetyltransferase required for the establishment of sister chromatid cohesion and couple the processes of cohesion and DNA replication to ensure that only sister chromatids become paired together. In contrast to the structural cohesins, the deposition and establishment factors are required only during S phase. Acts by acetylating the cohesin complex component SMC3. In Eremothecium gossypii (strain ATCC 10895 / CBS 109.51 / FGSC 9923 / NRRL Y-1056) (Yeast), this protein is N-acetyltransferase ECO1 (ECO1).